A 430-amino-acid chain; its full sequence is Adenylosuccinate synthetase (430 aa).

Residues 12-18 (GDEGKGK) and 40-42 (GHT) contribute to the GTP site. The active-site Proton acceptor is the aspartate 13. Aspartate 13 and glycine 40 together coordinate Mg(2+). IMP-binding positions include 13–16 (DEGK), 38–41 (NAGH), threonine 130, arginine 144, glutamine 224, threonine 239, and arginine 303. Catalysis depends on histidine 41, which acts as the Proton donor. 299–305 (TTTGRKR) serves as a coordination point for substrate. Residues arginine 305, 331–333 (KLD), and 413–415 (STS) each bind GTP.

This sequence belongs to the adenylosuccinate synthetase family. Homodimer. It depends on Mg(2+) as a cofactor.

Its subcellular location is the cytoplasm. It catalyses the reaction IMP + L-aspartate + GTP = N(6)-(1,2-dicarboxyethyl)-AMP + GDP + phosphate + 2 H(+). It participates in purine metabolism; AMP biosynthesis via de novo pathway; AMP from IMP: step 1/2. In terms of biological role, plays an important role in the de novo pathway of purine nucleotide biosynthesis. Catalyzes the first committed step in the biosynthesis of AMP from IMP. This chain is Adenylosuccinate synthetase, found in Ruegeria pomeroyi (strain ATCC 700808 / DSM 15171 / DSS-3) (Silicibacter pomeroyi).